The following is a 663-amino-acid chain: Innate immunity activator protein (663 aa).

Residues 1 to 68 (MLQMPKLNEI…RLPTQPGPGW (68 aa)) are disordered. A compositionally biased stretch (low complexity) spans 40-50 (RAQGQAGGARA). The stretch at 118–147 (AVHKQQRALEARLEACLEELRRLCLREAEL) forms a coiled coil. The Nuclear localization signal (NLS) 1 signature appears at 164 to 170 (PKVRRRI). Disordered regions lie at residues 242–362 (RRRN…ASSL), 378–425 (VPGQ…PRRR), and 444–493 (PLPH…RHRG). Residues 259–272 (ELSASDDSSLSDGL) show a composition bias toward low complexity. Pro residues predominate over residues 282 to 298 (PKPPPESPAPPSRPLPP). Positions 327–340 (TSLDHPYEKPRKSS) are enriched in basic and acidic residues. The Nuclear localization signal (NLS) 2 motif lies at 332–338 (PYEKPRK). Residues 350-361 (ATTPQDGPSASS) show a composition bias toward polar residues. Residues 422–428 (PRRRPTH) carry the Nuclear localization signal (NLS) 3 motif. Residues 455–475 (EDSGSDVSSISHPTSPGSSSP) are compositionally biased toward low complexity.

In terms of assembly, interacts with IRAK1, NOD2 and RIPK2; the interaction takes place upon PRR stimulation. Interacts with YWHAQ/14-3-3T; the interaction increases upon PRR stimulation and is required for cellular signaling pathway activation and cytokine secretion. Interacts (via N-terminal domain) with CYTH1 and CYTH2 (via their N-terminal domains). Interacts with FBXW11 and BTRC; associates with SCF E3 ubiquitin-protein ligase complexes. Highly expressed in intestinal myeloid-derived cells and expressed in monocyte-derived macrophages upon induction by PRR activation.

The protein resides in the nucleus. Its subcellular location is the cytoplasm. Functionally, expressed in peripheral macrophages and intestinal myeloid-derived cells, is required for optimal PRR (pattern recognition receptor)-induced signaling, cytokine secretion, and bacterial clearance. Upon stimulation of a broad range of PRRs (pattern recognition receptor) such as NOD2 or TLR2, TLR3, TLR4, TLR5, TLR7 and TLR9, associates with YWHAQ/14-3-3T, which in turn leads to the recruitment and activation of MAP kinases and NF-kappa-B signaling complexes that amplifies PRR-induced downstream signals and cytokine secretion. In the intestine, regulates adherens junction stability by regulating the degradation of CYTH1 and CYTH2, probably acting as substrate cofactor for SCF E3 ubiquitin-protein ligase complexes. Stabilizes adherens junctions by limiting CYTH1-dependent ARF6 activation. The polypeptide is Innate immunity activator protein (Homo sapiens (Human)).